A 1961-amino-acid polypeptide reads, in one-letter code: Myosin-9 (1961 aa).

Position 2 is an N-acetylalanine (A2). Residues 2–838 form a mediates interaction with LIMCH1 region; the sequence is AQQAADKYLY…RLFTKVKPLL (837 aa). K8 carries the N6-acetyllysine modification. Position 11 is a phosphotyrosine (Y11). The region spanning 27–77 is the Myosin N-terminal SH3-like domain; sequence GAKKLVWVPSTKNGFEPASLKEEVGEEAIVELVENGKKVKVNKDDIQKMNP. The region spanning 81–776 is the Myosin motor domain; it reads SKVEDMAELT…VLAHLEEERD (696 aa). N6-acetyllysine is present on K102. An ATP-binding site is contributed by 174 to 181; sequence GESGAGKT. N6-acetyllysine is present on residues K299, K435, and K613. S628 is modified (phosphoserine). An actin-binding region spans residues 654 to 676; it reads LAKLMATLRNTNPNFVCCIIPNH. The residue at position 754 (Y754) is a Phosphotyrosine. One can recognise an IQ domain in the interval 779-808; sequence ITDVIIGFQACCRGYLARKAFAKRQQQLTA. Residues 841–1927 are a coiled coil; it reads IRHEDELLAK…LKNKLRRGDM (1087 aa). K850 carries the N6-succinyllysine modification. N6-acetyllysine occurs at positions 860, 975, and 1024. Residues 1035 to 1055 are compositionally biased toward basic and acidic residues; sequence RLRREEKQRQELEKTRRKLEG. The interval 1035 to 1057 is disordered; the sequence is RLRREEKQRQELEKTRRKLEGDS. Residue S1114 is modified to Phosphoserine. N6-acetyllysine is present on residues K1234 and K1249. Residues 1331–1353 are disordered; the sequence is LKQMEDEKNSFREQLEEEEEEAK. Residues 1332–1344 are compositionally biased toward basic and acidic residues; that stretch reads KQMEDEKNSFREQ. K1358, K1393, K1405, K1411, K1460, and K1639 each carry N6-acetyllysine. N6-succinyllysine is present on K1670. S1715 bears the Phosphoserine mark. Residues K1794, K1803, and K1846 each carry the N6-acetyllysine modification. Residues 1878-1910 form a disordered region; the sequence is RQLEEAEEEAQRANASRRKLQRELEDATETADA. The residue at position 1924 (R1924) is an Omega-N-methylarginine. A disordered region spans residues 1938-1961; sequence KGTGDCSDEEVDGKADGADAKATE. Residue S1944 is modified to Phosphoserine. Over residues 1949–1961 the composition is skewed to basic and acidic residues; sequence DGKADGADAKATE.

It belongs to the TRAFAC class myosin-kinesin ATPase superfamily. Myosin family. In terms of assembly, myosin is a hexameric protein that consists of 2 heavy chain subunits (MHC), 2 alkali light chain subunits (MLC) and 2 regulatory light chain subunits (MLC-2). Interacts with RASIP1. Interacts with DDR1. Interacts with PDLIM2. Interacts with SVIL. Interacts with HTRA3. Interacts with Myo7a. Interacts with CFAP95. Interacts with LIMCH1; independently of the integration of MYH9 into the myosin complex. Interacts with RAB3A. Interacts with ZBED4. Interacts with S100A4; this interaction increases cell motility. In terms of processing, ISGylated. Ubiquitination.

Its subcellular location is the cytoplasm. It is found in the cytoskeleton. The protein localises to the cell cortex. The protein resides in the cytoplasmic vesicle. It localises to the secretory vesicle. Its subcellular location is the cortical granule. In terms of biological role, cellular myosin that appears to play a role in cytokinesis, cell shape, and specialized functions such as secretion and capping. Required for cortical actin clearance prior to oocyte exocytosis. Promotes cell motility in conjunction with S100A4. During cell spreading, plays an important role in cytoskeleton reorganization, focal contact formation (in the margins but not the central part of spreading cells), and lamellipodial retraction; this function is mechanically antagonized by MYH10. The sequence is that of Myosin-9 (Myh9) from Rattus norvegicus (Rat).